A 260-amino-acid chain; its full sequence is UPF0758 protein Smed_1459 (260 aa).

Positions 138-260 (VLSSWSAVID…HVSLKGLQLF (123 aa)) constitute an MPN domain. Zn(2+) is bound by residues His-209, His-211, and Asp-222. The short motif at 209–222 (HNHPSGDPTPSCAD) is the JAMM motif element.

Belongs to the UPF0758 family.

The protein is UPF0758 protein Smed_1459 of Sinorhizobium medicae (strain WSM419) (Ensifer medicae).